A 511-amino-acid polypeptide reads, in one-letter code: MKDKLIVFDTTLRDGEQSPGASMTREEKVRIAKALERMRVDVIEAGFPVASQGDFEAVQAVARSVRESTVCGLARALGADIDRAGEALAEAESARIHTFIATSPIHMKRKLRMEPDQVLEHAVKAVKRAREYTDDVEFSPEDAGRSEIEFLCRILEAVIAAGARTVNIPDTVGYNLPEQFAQLIRTLRERVSNSDKAIFSVHCHNDLGMAVANSLAAVMSGARQVECTINGLGERAGNAALEEVVMAVRTRQDSFPCDTNVDISQIVPTSRLVSGITGFSVQPNKAIVGANAFAHASGIHQDGVLKERQTYEIMSAEDVGWHANQMILGKHSGRNAFRARLRELGIELETEEELNAAFQRFKELADKKHVIYDEDLQALVTDANLAAENERFKLSWLKVVSETGETAIASVTLSVDSIERQASAPGSGPVDAAYKAIDSILQSNTELLLYSVNSITSGTDAQGEVTVRLKKNGRIANGQGADTDIVMASAKAYVNALNKILYPVERAYPQV.

The Pyruvate carboxyltransferase domain maps to 5–267 (LIVFDTTLRD…DTNVDISQIV (263 aa)). Positions 14, 202, 204, and 238 each coordinate Mn(2+). The regulatory domain stretch occupies residues 393 to 511 (KLSWLKVVSE…YPVERAYPQV (119 aa)).

It belongs to the alpha-IPM synthase/homocitrate synthase family. LeuA type 1 subfamily. In terms of assembly, homodimer. Mn(2+) is required as a cofactor.

It localises to the cytoplasm. The enzyme catalyses 3-methyl-2-oxobutanoate + acetyl-CoA + H2O = (2S)-2-isopropylmalate + CoA + H(+). It functions in the pathway amino-acid biosynthesis; L-leucine biosynthesis; L-leucine from 3-methyl-2-oxobutanoate: step 1/4. In terms of biological role, catalyzes the condensation of the acetyl group of acetyl-CoA with 3-methyl-2-oxobutanoate (2-ketoisovalerate) to form 3-carboxy-3-hydroxy-4-methylpentanoate (2-isopropylmalate). This Nitrosococcus oceani (strain ATCC 19707 / BCRC 17464 / JCM 30415 / NCIMB 11848 / C-107) protein is 2-isopropylmalate synthase.